The primary structure comprises 288 residues: tRNA pseudouridine synthase A (288 aa).

Catalysis depends on D58, which acts as the Nucleophile. Residue Y124 participates in substrate binding.

Belongs to the tRNA pseudouridine synthase TruA family. In terms of assembly, homodimer.

It carries out the reaction uridine(38/39/40) in tRNA = pseudouridine(38/39/40) in tRNA. Its function is as follows. Formation of pseudouridine at positions 38, 39 and 40 in the anticodon stem and loop of transfer RNAs. The sequence is that of tRNA pseudouridine synthase A from Corynebacterium diphtheriae (strain ATCC 700971 / NCTC 13129 / Biotype gravis).